A 402-amino-acid polypeptide reads, in one-letter code: GTPase HflX (402 aa).

In terms of domain architecture, Hflx-type G spans 181 to 350; the sequence is DTVGLIGYTN…MIIEHLNLSI (170 aa). Residues 187-194, 212-216, 233-236, 300-303, and 328-330 each bind GTP; these read GYTNAGKT, FTTLT, DTVG, NKVD, and SAK. Mg(2+) is bound by residues T194 and T214.

Belongs to the TRAFAC class OBG-HflX-like GTPase superfamily. HflX GTPase family. In terms of assembly, monomer. Associates with the 50S ribosomal subunit. Mg(2+) is required as a cofactor.

It localises to the cytoplasm. In terms of biological role, GTPase that associates with the 50S ribosomal subunit and may have a role during protein synthesis or ribosome biogenesis. This chain is GTPase HflX, found in Methanocaldococcus jannaschii (strain ATCC 43067 / DSM 2661 / JAL-1 / JCM 10045 / NBRC 100440) (Methanococcus jannaschii).